The chain runs to 173 residues: Adenine phosphoribosyltransferase (173 aa).

Belongs to the purine/pyrimidine phosphoribosyltransferase family. In terms of assembly, homodimer.

It is found in the cytoplasm. It catalyses the reaction AMP + diphosphate = 5-phospho-alpha-D-ribose 1-diphosphate + adenine. It participates in purine metabolism; AMP biosynthesis via salvage pathway; AMP from adenine: step 1/1. In terms of biological role, catalyzes a salvage reaction resulting in the formation of AMP, that is energically less costly than de novo synthesis. The sequence is that of Adenine phosphoribosyltransferase from Thermotoga maritima (strain ATCC 43589 / DSM 3109 / JCM 10099 / NBRC 100826 / MSB8).